A 919-amino-acid polypeptide reads, in one-letter code: Glutamate receptor ionotropic, kainate 3 (919 aa).

Residues 1 to 31 form the signal peptide; the sequence is MTAPWRRLRSLVWEYWAGLLVCAFWIPDSRG. Residues 32-563 are Extracellular-facing; the sequence is MPHVIRIGGI…VFSFLNPLSP (532 aa). Residues asparagine 70, asparagine 76, asparagine 278, asparagine 381, asparagine 415, asparagine 426, and asparagine 433 are each glycosylated (N-linked (GlcNAc...) asparagine). Cysteine 99 and cysteine 350 are oxidised to a cystine. L-glutamate contacts are provided by proline 518, threonine 520, and arginine 525. N-linked (GlcNAc...) asparagine glycans are attached at residues asparagine 548 and asparagine 551. A helical transmembrane segment spans residues 564–584; sequence DIWMYVLLAYLGVSCVLFVIA. Topologically, residues 585-636 are cytoplasmic; that stretch reads RFSPYEWYDAHPCNPGSEVVENNFTLLNSFWFGMGSLMQQGSELMPKALSTR. Residues 637 to 657 traverse the membrane as a helical segment; sequence IIGGIWWFFTLIIISSYTANL. Residues 658 to 820 are Extracellular-facing; it reads AAFLTVERME…KEASALGIQK (163 aa). The L-glutamate site is built by alanine 691, threonine 692, and glutamate 739. N-linked (GlcNAc...) asparagine glycosylation is present at asparagine 752. Residues 821–841 form a helical membrane-spanning segment; that stretch reads IGGIFIVLAAGLVLSVLVAVG. Residues 842-919 lie on the Cytoplasmic side of the membrane; the sequence is EFVYKLRKTA…CSTSLAPVFP (78 aa). Serine 869 is subject to Phosphoserine. Lysine 887 is covalently cross-linked (Glycyl lysine isopeptide (Lys-Gly) (interchain with G-Cter in SUMO1)).

The protein belongs to the glutamate-gated ion channel (TC 1.A.10.1) family. GRIK3 subfamily. Homotetramer, and heterotetramer with either GRIK4 or GRIK5. Can form functional heteromeric receptors with GRIK2. Interacts with PRKCABP. Interacts with NETO2.

Its subcellular location is the cell membrane. It localises to the postsynaptic cell membrane. The enzyme catalyses Ca(2+)(in) = Ca(2+)(out). Functionally, ionotropic glutamate receptor that functions as a cation-permeable ligand-gated ion channel, gated by L-glutamate and the glutamatergic agonist kainic acid. Binding of the excitatory neurotransmitter L-glutamate induces a conformation change, leading to the opening of the cation channel, and thereby converts the chemical signal to an electrical impulse. The receptor then desensitizes rapidly and enters a transient inactive state, characterized by the presence of bound agonist. In association with GRIK2, involved in presynaptic facilitation of glutamate release at hippocampal mossy fiber synapses. This chain is Glutamate receptor ionotropic, kainate 3 (GRIK3), found in Macaca fascicularis (Crab-eating macaque).